Reading from the N-terminus, the 464-residue chain is UPF0210 protein Cgl1545/cg1743 (464 aa).

It belongs to the UPF0210 family. As to quaternary structure, homodimer.

This is UPF0210 protein Cgl1545/cg1743 from Corynebacterium glutamicum (strain ATCC 13032 / DSM 20300 / JCM 1318 / BCRC 11384 / CCUG 27702 / LMG 3730 / NBRC 12168 / NCIMB 10025 / NRRL B-2784 / 534).